We begin with the raw amino-acid sequence, 252 residues long: tRNA pseudouridine synthase A (252 aa).

Asp-54 (nucleophile) is an active-site residue. Residue Tyr-112 coordinates substrate.

Belongs to the tRNA pseudouridine synthase TruA family. As to quaternary structure, homodimer.

The enzyme catalyses uridine(38/39/40) in tRNA = pseudouridine(38/39/40) in tRNA. Its function is as follows. Formation of pseudouridine at positions 38, 39 and 40 in the anticodon stem and loop of transfer RNAs. The chain is tRNA pseudouridine synthase A from Oenococcus oeni (strain ATCC BAA-331 / PSU-1).